The chain runs to 1284 residues: MRPPNKEIPRILAFFTAFTLFGSTLALLPAPPAHAYVSSLGNLISSSVTGDTLTLTVDNGAEPSDDLLIVQAVQNGILKVDYRPNSITPSAKTPMLDPNKTWSAVGATINTTANPMTITTSNMKIEITKNPVRMTVKKADGTTLFWEPSGGGVFSDGVRFLHATGDNMYGIRSFNAFDSGGDLLRNSSNHAAHAGEQGDSGGPLIWSTAGYGLLVDSDGGYPYTDSTTGQMEFYYGGTPPEGRRYAKQNVEYYIMLGTPKEIMTDVGEITGKPPMLPKWSLGFMNFEWDTNQTEFTNNVDTYRAKNIPIDAYAFDYDWKKYGETNYGEFAWNTTNFPSASTTSLKSTMDAKGIKMIGITKPRIVTKDASANVTTQGTDATNGGYFYPGHNEYQDYFIPVTVRSIDPYNANERAWFWNHSTDALNKGIVGWWNDETDKVSSGGALYWFGNFTTGHMSQTMYEGGRAYTSGAQRVWQTARTFYPGAQRYATTLWSGDIGIQYNKGERINWAAGMQEQRAVMLSSVNNGQVKWGMDTGGFNQQDGTTNNPNPDLYARWMQFSALTPVFRVHGNNHQQRQPWYFGSTAEEASKEAIQLRYSLIPYMYAYERSAYENGNGLVRPLMQAYPTDAAVKNYTDAWMFGDWLLAAPVVDKQQTSKDIYLPSGSWIDYARGNAITGGQTIRYSVNPDTLTDMPLFIKKGAIIPTQKVQDYVGQASVTSVDVDVFPDTTQSSFTYYDDDGASYNYESGTYFKQNMTAQDNGSGSLSFTLGAKSGSYTPALQSYIVKLHGSAGTSVTNNSAAMTSYASLEALKAAAGEGWATGKDIYGDVTYVKVTAGTASSKSIAVTGVAAVSATTSQYEAEDASLSGNSVAAKASINTNHTGYTGTGFVDGLGNDGAGVTFYPKVKTGGDYNVSLRYANASGTAKSVSIFVNGKRVKSTSLANLANWDTWSTQSETLPLTAGVNVVTYKYYSDAGDTGNVNIDNITVPFAPIIGKYEAESAELSGGSSLNTNHWYYSGTAFVDGLSAVGAQVKYNVNVPSAGSYQVALRYANGSAATKTLSTYINGAKLGQTSFTSPGTNWNVWQDNVQTVTLNAGANTIAFKYDAADSGNINVDRLLLSTSAAGTPVSEQNLLDNPGFERDTSQTNNWIEWHPGTQAVAFGVDSGSTTNPPESPWSGDKRAYFFAAGAYQQSIHQTISVPVNNVKYKFEAWVRMKNTTPTTARAEIQNYGGSAIYANISNSGVWKYISVSDIMVTNGQIDVGFYVDSPGGTTLHIDDVRVTKQ.

Positions 1-35 are cleaved as a signal peptide; the sequence is MRPPNKEIPRILAFFTAFTLFGSTLALLPAPPAHA. Catalysis depends on Asp-433, which acts as the Nucleophile. Asp-436 is an active-site residue. The active-site Proton donor is Asp-495. CBM6 domains lie at 856-988 and 994-1120; these read SQYE…ITVP and GKYE…LLLS.

Belongs to the glycosyl hydrolase 31 family.

The protein resides in the secreted. It carries out the reaction 2 D-maltotetraose = alpha-isomaltosyl-(1-&gt;4)-D-maltotriose + D-maltotriose. The catalysed reaction is Transfers an alpha-D-glucosyl residue in a (1-&gt;4)-alpha-D-glucan to the primary hydroxy group of glucose, free or combined in a (1-&gt;4)-alpha-D-glucan.. With respect to regulation, strongly activated and stabilized by various divalent cations. Strongly inhibited by Cu(2+), Hg(2+) and EDTA, and moderately inhibited by Tris. Glycosyltransferase involved, together with CtsY, in the conversion of alpha-1,4-glucan into a cyclic tetrasaccharide (CTS) constructed from four alpha-glucopyranosyl residues. Catalyzes an intermolecular transglucosylation in which a glucose residue at the non-reducing end of maltotetraose is transferred to the 6-OH of an other non-reducing glucose, leading to the formation of alpha-isomaltosyl-(1-&gt;4)-D-maltotriose. Has a wide substrate specificity, and acts on oligosaccharides with alpha-1,4-glucosidic linkages at the non-reducing end, except for maltose. In contrast, has little activity toward oligosaccharides with alpha-1,6-glucosidic linkages at the non-reducing end. The polypeptide is 1,6-alpha-glucosyltransferase (Sporosarcina globispora (Bacillus globisporus)).